The primary structure comprises 305 residues: Dioxygenase hkm4 (305 aa).

Fe cation contacts are provided by histidine 140, aspartate 142, and histidine 216.

Belongs to the PhyH family. It depends on Fe cation as a cofactor.

It participates in secondary metabolite biosynthesis. Functionally, dioxygenase; part of the gene cluster that mediates the biosynthesis of hancockiamides, an unusual new family of N-cinnamoylated piperazines. The NRPS hkm10 and the NmrA-like reductase hkm9 are proposed to convert two molecules of L-Phe to the intermediary piperazine called xenocockiamide A. Xenocockiamide A is then converted to hancockiamide D via a series of hydroxylations and O-methylations. The tyrosinase hkm6 may catalyze an aromatic hydroxylation, then the 2-oxoglutarate-dependent Fe(II) dioxygenase hkm4 and the FAD-dependent phenol hydroxylase hkm7 may catalyze consecutive hydroxylations to install 2 more hydroxy groups, and the methyltransferase hkm8 probably catalyzes two methylations using 2 molecules of S-adenosyl-L-methionine (SAM). The NRPS hkm11 activates and transfers trans-cinnamate supplied by the PAL hkm12 to hancockiamide D and produces hancockiamide A. NRPS Hkm11 has the flexibility to tolerate the bulky hancockiamide G as a substrate and the absence of the acetyl-transferase hkm3 opens up the opportunity for hkm11 to introduce a second N-cinnamoyl moiety. The cytochrome P450 monooxygenase hkm5 catalyzes the methylenedioxy bridge formation, converting hancockiamide A into hancockiamide G. Hkm5 can also convert hancockiamide B into hancockiamide C, and hancockiamide D into hancockiamide H. The N-acetyltransferase hkm3 finally transfers an acetyl group to 1-N of piperazine, converting hancockiamide A into hancockiamide B and hancockiamide G into hancockiamide C. In Aspergillus hancockii, this protein is Dioxygenase hkm4.